The sequence spans 248 residues: Type II secretion system protein N (248 aa).

At 1–6 (MKLKSG) the chain is on the cytoplasmic side. A helical; Signal-anchor for type II membrane protein membrane pass occupies residues 7–27 (IVTGVALVLAYGLFLASYAPA). Residues 28–248 (RLLTAVPLPA…RTLNFQGRLL (221 aa)) are Periplasmic-facing.

This sequence belongs to the GSP N family.

It localises to the cell inner membrane. Its function is as follows. Involved in a type II secretion system (T2SS, formerly general secretion pathway, GSP) for the export of proteins. Required for the translocation of the multiple pectic enzymes. In Pectobacterium carotovorum subsp. carotovorum (Erwinia carotovora subsp. carotovora), this protein is Type II secretion system protein N (outN).